A 317-amino-acid polypeptide reads, in one-letter code: Apolipoprotein E (317 aa).

Positions 1–18 are cleaved as a signal peptide; sequence MKVLWAALLVTFLAGCQA. A run of 8 repeats spans residues 80 to 101, 102 to 123, 124 to 145, 146 to 167, 168 to 189, 190 to 211, 212 to 233, and 234 to 255. The 8 X 22 AA approximate tandem repeats stretch occupies residues 80–255; the sequence is TLMDETMKEL…RLDEVKEQVA (176 aa). At M143 the chain carries Methionine sulfoxide. Residue S147 is modified to Phosphoserine. An LDL and other lipoprotein receptors binding region spans residues 158–168; the sequence is HLRKLRKRLLR. A heparin-binding site is contributed by 162–165; it reads LRKR. Positions 210–290 are lipid-binding and lipoprotein association; the sequence is AATVGSLASQ…SWFEPLVEDM (81 aa). Position 229 to 236 (229 to 236) interacts with heparin; it reads GERLRARM. Residues 266 to 317 form a homooligomerization region; sequence QQISLQAEAFQARLKSWFEPLVEDMQRQWAGLVEKVQAAVGASTAPVPIDNH. The specificity for association with VLDL stretch occupies residues 278 to 290; sequence RLKSWFEPLVEDM.

This sequence belongs to the apolipoprotein A1/A4/E family. In terms of assembly, homotetramer. May interact with ABCA1; functionally associated with ABCA1 in the biogenesis of HDLs. May interact with APP/A4 amyloid-beta peptide; the interaction is extremely stable in vitro but its physiological significance is unclear. May interact with MAPT. May interact with MAP2. In the cerebrospinal fluid, interacts with secreted SORL1. Interacts with PMEL; this allows the loading of PMEL luminal fragment on ILVs to induce fibril nucleation. Post-translationally, APOE exists as multiple glycosylated and sialylated glycoforms within cells and in plasma. The extent of glycosylation and sialylation are tissue and context specific. In terms of processing, glycated in plasma VLDL. Phosphorylated by FAM20C in the extracellular medium.

The protein resides in the secreted. The protein localises to the extracellular space. It localises to the extracellular matrix. It is found in the extracellular vesicle. Its subcellular location is the endosome. The protein resides in the multivesicular body. Functionally, APOE is an apolipoprotein, a protein associating with lipid particles, that mainly functions in lipoprotein-mediated lipid transport between organs via the plasma and interstitial fluids. APOE is a core component of plasma lipoproteins and is involved in their production, conversion and clearance. Apolipoproteins are amphipathic molecules that interact both with lipids of the lipoprotein particle core and the aqueous environment of the plasma. As such, APOE associates with chylomicrons, chylomicron remnants, very low density lipoproteins (VLDL) and intermediate density lipoproteins (IDL) but shows a preferential binding to high-density lipoproteins (HDL). It also binds a wide range of cellular receptors including the LDL receptor/LDLR, the LDL receptor-related proteins LRP1, LRP2 and LRP8 and the very low-density lipoprotein receptor/VLDLR that mediate the cellular uptake of the APOE-containing lipoprotein particles. Finally, APOE also has a heparin-binding activity and binds heparan-sulfate proteoglycans on the surface of cells, a property that supports the capture and the receptor-mediated uptake of APOE-containing lipoproteins by cells. A main function of APOE is to mediate lipoprotein clearance through the uptake of chylomicrons, VLDLs, and HDLs by hepatocytes. APOE is also involved in the biosynthesis by the liver of VLDLs as well as their uptake by peripheral tissues ensuring the delivery of triglycerides and energy storage in muscle, heart and adipose tissues. By participating in the lipoprotein-mediated distribution of lipids among tissues, APOE plays a critical role in plasma and tissues lipid homeostasis. APOE is also involved in two steps of reverse cholesterol transport, the HDLs-mediated transport of cholesterol from peripheral tissues to the liver, and thereby plays an important role in cholesterol homeostasis. First, it is functionally associated with ABCA1 in the biogenesis of HDLs in tissues. Second, it is enriched in circulating HDLs and mediates their uptake by hepatocytes. APOE also plays an important role in lipid transport in the central nervous system, regulating neuron survival and sprouting. This chain is Apolipoprotein E (APOE), found in Macaca fascicularis (Crab-eating macaque).